Consider the following 784-residue polypeptide: Cyclin-dependent kinase 11B (784 aa).

Basic and acidic residues predominate over residues 18–60 (QEKKRRKEQEEKAEIKRLKNSDDRDSKRDSLEEGELRDHRMEI). The tract at residues 18 to 401 (QEKKRRKEQE…EGDYVPDSPA (384 aa)) is disordered. A phosphoserine mark is found at S47 and S72. The span at 95-113 (EKAHHRKDEKRKEKRRHRS) shows a compositional bias: basic residues. Composition is skewed to basic and acidic residues over residues 114–131 (HSAE…EREH), 138–227 (REEQ…DKGK), and 238–263 (PPRE…RDLL). Position 115 is a phosphoserine (S115). S270 is subject to Phosphoserine. Low complexity predominate over residues 278-289 (SAESSSAESGSG). Acidic residues-rich tracts occupy residues 290 to 353 (SEEE…EDRE) and 372 to 381 (DSEEGEEEVG). The Protein kinase domain maps to 427-712 (FQCLNRIEEG…AEDGLKHEYF (286 aa)). ATP contacts are provided by residues 433–441 (IEEGTYGVV) and K456. S471 carries the post-translational modification Phosphoserine; by CDK7. T477 bears the Phosphothreonine; by CDK7 mark. The active-site Proton acceptor is D551. Phosphoserine is present on S578. Y583 carries the post-translational modification Phosphotyrosine. T584 is subject to Phosphothreonine. Residue K630 forms a Glycyl lysine isopeptide (Lys-Gly) (interchain with G-Cter in SUMO2) linkage. A disordered region spans residues 722–784 (SMFPTWPAKS…AAGPGFSLKF (63 aa)). T740 is subject to Phosphothreonine. A Phosphoserine modification is found at S741.

Belongs to the protein kinase superfamily. CMGC Ser/Thr protein kinase family. CDC2/CDKX subfamily. May interact PAK1 and RANBP9. p110C interacts with RNPS1. Interacts with CCND3. Interacts with CCNL1 and CCNL2. Forms complexes with pre-mRNA-splicing factors, including at least SRSF1, SRSF2 AND SRSF7/SLU7. It depends on Mg(2+) as a cofactor. In terms of processing, phosphorylation at Ser-115 creates a binding site for 14-3-3 proteins.

The catalysed reaction is L-seryl-[protein] + ATP = O-phospho-L-seryl-[protein] + ADP + H(+). The enzyme catalyses L-threonyl-[protein] + ATP = O-phospho-L-threonyl-[protein] + ADP + H(+). Its activity is regulated as follows. Phosphorylation at Thr-437 or Tyr-438 inactivates the enzyme, while phosphorylation at Thr-584 activates it. In terms of biological role, plays multiple roles in cell cycle progression, cytokinesis and apoptosis. Involved in pre-mRNA splicing in a kinase activity-dependent manner. May act as a negative regulator of normal cell cycle progression. The sequence is that of Cyclin-dependent kinase 11B (Cdk11b) from Mus musculus (Mouse).